The following is a 510-amino-acid chain: Probable inositol 3-phosphate synthase isozyme 3 (510 aa).

This sequence belongs to the myo-inositol 1-phosphate synthase family. It depends on NAD(+) as a cofactor. In terms of tissue distribution, expressed in siliques, leaves, roots, seed endosperm, but not in embryos. Highest expression in roots. Confined to vascular tissue and hydathodes of leaves.

The protein resides in the cytoplasm. It catalyses the reaction D-glucose 6-phosphate = 1D-myo-inositol 3-phosphate. The protein operates within polyol metabolism; myo-inositol biosynthesis; myo-inositol from D-glucose 6-phosphate: step 1/2. In terms of biological role, key enzyme in myo-inositol biosynthesis pathway that catalyzes the conversion of glucose 6-phosphate to 1-myo-inositol 1-phosphate in a NAD-dependent manner. This chain is Probable inositol 3-phosphate synthase isozyme 3 (IPS3), found in Arabidopsis thaliana (Mouse-ear cress).